Here is a 160-residue protein sequence, read N- to C-terminus: Large ribosomal subunit protein uL16 (160 aa).

Polar residues predominate over residues K138–T148. The interval K138–Q160 is disordered. Basic and acidic residues predominate over residues K149–Q160.

It belongs to the universal ribosomal protein uL16 family. In terms of assembly, part of the 50S ribosomal subunit.

In terms of biological role, binds 23S rRNA and is also seen to make contacts with the A and possibly P site tRNAs. This is Large ribosomal subunit protein uL16 from Prochlorococcus marinus (strain MIT 9312).